The chain runs to 96 residues: MGFSSIWHWIIVLVVVLLLFGAGKIPRLMGDVAKGVKAFKKGMADDEDDEAASVSAERRGIEDGKPAQTIYPPQQPQQPQQPPQQPPVHRDDAPRG.

Residues Met1–Gly21 traverse the membrane as a helical segment. Residues Gly42 to Gly96 are disordered. Basic and acidic residues predominate over residues Ala56–Lys65. The span at Pro73–Pro86 shows a compositional bias: pro residues.

It belongs to the TatA/E family. As to quaternary structure, the Tat system comprises two distinct complexes: a TatABC complex, containing multiple copies of TatA, TatB and TatC subunits, and a separate TatA complex, containing only TatA subunits. Substrates initially bind to the TatABC complex, which probably triggers association of the separate TatA complex to form the active translocon.

The protein resides in the cell inner membrane. In terms of biological role, part of the twin-arginine translocation (Tat) system that transports large folded proteins containing a characteristic twin-arginine motif in their signal peptide across membranes. TatA could form the protein-conducting channel of the Tat system. The chain is Sec-independent protein translocase protein TatA from Rhodospirillum rubrum (strain ATCC 11170 / ATH 1.1.1 / DSM 467 / LMG 4362 / NCIMB 8255 / S1).